The sequence spans 460 residues: ATP synthase subunit beta (460 aa).

Position 150 to 157 (150 to 157) interacts with ATP; the sequence is GGAGVGKT.

The protein belongs to the ATPase alpha/beta chains family. F-type ATPases have 2 components, CF(1) - the catalytic core - and CF(0) - the membrane proton channel. CF(1) has five subunits: alpha(3), beta(3), gamma(1), delta(1), epsilon(1). CF(0) has three main subunits: a(1), b(2) and c(9-12). The alpha and beta chains form an alternating ring which encloses part of the gamma chain. CF(1) is attached to CF(0) by a central stalk formed by the gamma and epsilon chains, while a peripheral stalk is formed by the delta and b chains.

It localises to the cell inner membrane. It carries out the reaction ATP + H2O + 4 H(+)(in) = ADP + phosphate + 5 H(+)(out). Produces ATP from ADP in the presence of a proton gradient across the membrane. The catalytic sites are hosted primarily by the beta subunits. The polypeptide is ATP synthase subunit beta (Photorhabdus laumondii subsp. laumondii (strain DSM 15139 / CIP 105565 / TT01) (Photorhabdus luminescens subsp. laumondii)).